Reading from the N-terminus, the 95-residue chain is Acylphosphatase (95 aa).

Residues 10 to 95 enclose the Acylphosphatase-like domain; that stretch reads CIHVTVSGKV…VEDYSDFRVR (86 aa). Catalysis depends on residues Arg25 and Asn43.

It belongs to the acylphosphatase family.

It carries out the reaction an acyl phosphate + H2O = a carboxylate + phosphate + H(+). The protein is Acylphosphatase (acyP) of Coxiella burnetii (strain RSA 493 / Nine Mile phase I).